A 549-amino-acid chain; its full sequence is MARTLRPSPLCPGGGKAQLSSASLLGAGLLLQPPTPPPLLLLLFPLLLFSRLCGALAGPIIVEPHVTAVWGKNVSLKCLIEVNETITQISWEKIHGKSSQTVAVHHPQYGFSVQGEYQGRVLFKNYSLNDATITLHNIGFSDSGKYICKAVTFPLGNAQSSTTVTVLVEPTVSLIKGPDSLIDGGNETVAAICIAATGKPVAHIDWEGDLGEMESTTTSFPNETATIISQYKLFPTRFARGRRITCVVKHPALEKDIRYSFILDIQYAPEVSVTGYDGNWFVGRKGVNLKCNADANPPPFKSVWSRLDGQWPDGLLASDNTLHFVHPLTFNYSGVYICKVTNSLGQRSDQKVIYISDPPTTTTLQPTIQWHPSTADIEDLATEPKKLPFPLSTLATIKDDTIATIIASVVGGALFIVLVSVLAGIFCYRRRRTFRGDYFAKNYIPPSDMQKESQIDVLQQDELDSYPDSVKKENKNPVNNLIRKDYLEEPEKTQWNNVENLNRFERPMDYYEDLKMGMKFVSDEHYDENEDDLVSHVDGSVISRREWYV.

An N-terminal signal peptide occupies residues 1–57 (MARTLRPSPLCPGGGKAQLSSASLLGAGLLLQPPTPPPLLLLLFPLLLFSRLCGALA). The Extracellular segment spans residues 58–404 (GPIIVEPHVT…ATIKDDTIAT (347 aa)). The Ig-like V-type domain occupies 59–165 (PIIVEPHVTA…GNAQSSTTVT (107 aa)). N-linked (GlcNAc...) asparagine glycans are attached at residues N73, N83, N125, N186, N222, and N331. C78 and C148 form a disulfide bridge. 2 Ig-like C2-type domains span residues 170-258 (PTVS…KDIR) and 269-354 (PEVS…KVIY). Intrachain disulfides connect C193–C246 and C291–C338. The helical transmembrane segment at 405-425 (IIASVVGGALFIVLVSVLAGI) threads the bilayer. Over 426 to 549 (FCYRRRRTFR…SVISRREWYV (124 aa)) the chain is Cytoplasmic.

It belongs to the nectin family. As to quaternary structure, cis- and trans-homodimer. Can form trans-heterodimers with NECTIN1, NECTIN2, PVR, IGSF4B/Necl-1 and with IGSF4. Interaction between NECTIN1 and NECTIN3 on the pre- and postsynaptic sites, respectively, initiates the formation of puncta adherentia junctions between axons and dendrites. Interacts (via Cytoplasmic domain) with AFDN, providing a connection with the actin cytoskeleton. Binds with low affinity to TIGIT. In terms of assembly, (Microbial infection) Interacts with C.difficile toxin TcdB, suggesting that it may contribute to TcdB toxin entry into cells. It was however shown that NECTIN3/PVRL3 does not act as a major receptor for TcdB. Predominantly expressed in testis and placenta as well as in many cell lines, including epithelial cell lines.

It is found in the cell membrane. Its subcellular location is the postsynaptic cell membrane. The protein resides in the cell junction. The protein localises to the adherens junction. In terms of biological role, cell adhesion molecule that promotes cell-cell adhesion through heterophilic trans-interactions with nectins-like or other nectins, such as trans-interaction with NECTIN2 at Sertoli-spermatid junctions. Trans-interaction with PVR induces activation of CDC42 and RAC small G proteins through common signaling molecules such as SRC and RAP1. Induces endocytosis-mediated down-regulation of PVR from the cell surface, resulting in reduction of cell movement and proliferation. Involved in axon guidance by promoting contacts between the commissural axons and the floor plate cells. Also involved in the formation of cell-cell junctions, including adherens junctions and synapses. Promotes formation of checkerboard-like cellular pattern of hair cells and supporting cells in the auditory epithelium via heterophilic interaction with NECTIN1: NECTIN1 is present in the membrane of hair cells and associates with NECTIN3 on supporting cells, thereby mediating heterotypic adhesion between these two cell types. Plays a role in the morphology of the ciliary body. In Homo sapiens (Human), this protein is Nectin-3.